The sequence spans 183 residues: Hypoxanthine-guanine-xanthine phosphoribosyltransferase (183 aa).

GMP-binding positions include E102–T110, K134, and D163. The active-site Proton acceptor is D106. Residue D163 participates in Mg(2+) binding.

As to quaternary structure, homodimer. Mg(2+) serves as cofactor.

Its subcellular location is the cytoplasm. The enzyme catalyses IMP + diphosphate = hypoxanthine + 5-phospho-alpha-D-ribose 1-diphosphate. The catalysed reaction is GMP + diphosphate = guanine + 5-phospho-alpha-D-ribose 1-diphosphate. It carries out the reaction XMP + diphosphate = xanthine + 5-phospho-alpha-D-ribose 1-diphosphate. Its pathway is purine metabolism; GMP biosynthesis via salvage pathway; GMP from guanine: step 1/1. It functions in the pathway purine metabolism; IMP biosynthesis via salvage pathway; IMP from hypoxanthine: step 1/1. The protein operates within purine metabolism; XMP biosynthesis via salvage pathway; XMP from xanthine: step 1/1. In terms of biological role, essential in nucleic acid metabolism of T.foetus because the parasite is unable to synthesize purine nucleotides de novo and relies on the HGXPRTase activities for its purine requirements by salvaging purine bases from the host. Works with guanine, hypoxanthine and xanthine. In Tritrichomonas foetus (Trichomonas foetus), this protein is Hypoxanthine-guanine-xanthine phosphoribosyltransferase (HPT).